Here is a 570-residue protein sequence, read N- to C-terminus: Coiled-coil domain-containing protein 22 homolog (570 aa).

Disordered regions lie at residues 110–129 (RQSEDDANRTSHPLSSREQL) and 234–280 (LTST…PLEL). Residues 248–257 (TSPTQTSTTA) are compositionally biased toward polar residues. Residues 265-276 (SSEATATSTTTT) are compositionally biased toward low complexity. Coiled coils occupy residues 308–471 (ELKI…LQRQ) and 529–570 (GEKL…ITVG).

This sequence belongs to the CCDC22 family.

This Drosophila willistoni (Fruit fly) protein is Coiled-coil domain-containing protein 22 homolog.